An 85-amino-acid polypeptide reads, in one-letter code: Large ribosomal subunit protein bL27 (85 aa).

The segment at 1 to 21 is disordered; that stretch reads MAHKKAGGSTRNGRDSNAQRL. Residues 9 to 19 are compositionally biased toward polar residues; sequence STRNGRDSNAQ.

This sequence belongs to the bacterial ribosomal protein bL27 family.

The protein is Large ribosomal subunit protein bL27 of Pectobacterium atrosepticum (strain SCRI 1043 / ATCC BAA-672) (Erwinia carotovora subsp. atroseptica).